The chain runs to 54 residues: Ovomucoid (54 aa).

The Kazal-like domain maps to 4–54; it reads VDCSDYPKPACTLEYMPLCGSDNKTYGNRCNFCNAVVDSNGTLTLSHFGKC. 3 cysteine pairs are disulfide-bonded: Cys-6–Cys-36, Cys-14–Cys-33, and Cys-22–Cys-54. N-linked (GlcNAc...) asparagine glycosylation is present at Asn-43.

It localises to the secreted. In Dendrocygna viduata (White-faced whistling-duck), this protein is Ovomucoid.